Reading from the N-terminus, the 27-residue chain is Caerulein precursor fragment R2 (27 aa).

Expressed by the skin glands.

It localises to the secreted. In terms of biological role, antimicrobial peptide. The protein is Caerulein precursor fragment R2 of Xenopus ruwenzoriensis (Uganda clawed frog).